The following is a 446-amino-acid chain: Chromosomal replication initiator protein DnaA (446 aa).

The domain I, interacts with DnaA modulators stretch occupies residues 1 to 72; the sequence is MENILDLWNQ…ADTIYELTGE (72 aa). The domain II stretch occupies residues 72-109; sequence EELSVKFVIPQNQDEENFLPKPQVKKAAKEEPSDFPQS. The interval 110 to 326 is domain III, AAA+ region; sequence MLNPKYTFDT…GALIRVVAYS (217 aa). ATP is bound by residues glycine 154, glycine 156, lysine 157, and threonine 158. The tract at residues 327-446 is domain IV, binds dsDNA; that stretch reads SLINKDINAD…QVKEIKELLK (120 aa).

This sequence belongs to the DnaA family. In terms of assembly, oligomerizes as a right-handed, spiral filament on DNA at oriC.

The protein localises to the cytoplasm. Functionally, plays an essential role in the initiation and regulation of chromosomal replication. ATP-DnaA binds to the origin of replication (oriC) to initiate formation of the DNA replication initiation complex once per cell cycle. Binds the DnaA box (a 9 base pair repeat at the origin) and separates the double-stranded (ds)DNA. Forms a right-handed helical filament on oriC DNA; dsDNA binds to the exterior of the filament while single-stranded (ss)DNA is stabiized in the filament's interior. The ATP-DnaA-oriC complex binds and stabilizes one strand of the AT-rich DNA unwinding element (DUE), permitting loading of DNA polymerase. After initiation quickly degrades to an ADP-DnaA complex that is not apt for DNA replication. Binds acidic phospholipids. The protein is Chromosomal replication initiator protein DnaA of Bacillus velezensis (strain DSM 23117 / BGSC 10A6 / LMG 26770 / FZB42) (Bacillus amyloliquefaciens subsp. plantarum).